Here is a 144-residue protein sequence, read N- to C-terminus: Transmembrane protein 170A (144 aa).

The Lumenal segment spans residues 1–50 (MEREGSGGSGGSAGLLQQILSLKVVPRVGNGTLCPNSTSLCSFPEMWYGV). Asn-30 and Asn-36 each carry an N-linked (GlcNAc...) asparagine glycan. A helical membrane pass occupies residues 51–71 (FLWALVSSLFFHVPAGLLALF). Topologically, residues 72 to 85 (TLRHHKYGRFMSVS) are cytoplasmic. A helical transmembrane segment spans residues 86–106 (ILLMGIVGPITAGILTSAAIA). The Lumenal portion of the chain corresponds to 107–116 (GVYRAAGKEM). Residues 117 to 137 (IPFEALTLGTGQTFCVLVVSF) traverse the membrane as a helical segment. Topologically, residues 138 to 144 (LRILATL) are cytoplasmic.

It belongs to the TMEM170 family. Interacts with RTN4.

It localises to the endoplasmic reticulum membrane. The protein localises to the nucleus envelope. Acts as a regulator of endoplasmic reticulum (ER) and nuclear envelope (NE) morphogenesis. Affects the ratio between tubular ER and ER sheets by promoting sheet formation at the expense of tubules. Influences NE expansion, nuclear pore complex formation and proper localization of inner nuclear membrane proteins. The chain is Transmembrane protein 170A (TMEM170A) from Homo sapiens (Human).